A 177-amino-acid polypeptide reads, in one-letter code: MFKELYRDSIVKSLKDKFNYGNIMQVPKLVKVCINMGVGGAATDNKAINEPFDDLYLIAGQKPVSTFAKKSISGFKIRKGATVGCKVTLRRDKMYEFLERLIYVALPREKDFRGFSVKQFDGNGNFSFGIKEHISFLEIDYDKISKIRGMDINIVTSAASDKEAKELLLAFKFPFFD.

It belongs to the universal ribosomal protein uL5 family. As to quaternary structure, part of the 50S ribosomal subunit; part of the 5S rRNA/L5/L18/L25 subcomplex. Contacts the 5S rRNA and the P site tRNA. Forms a bridge to the 30S subunit in the 70S ribosome.

This is one of the proteins that bind and probably mediate the attachment of the 5S RNA into the large ribosomal subunit, where it forms part of the central protuberance. In the 70S ribosome it contacts protein S13 of the 30S subunit (bridge B1b), connecting the 2 subunits; this bridge is implicated in subunit movement. Contacts the P site tRNA; the 5S rRNA and some of its associated proteins might help stabilize positioning of ribosome-bound tRNAs. In Wolbachia sp. subsp. Brugia malayi (strain TRS), this protein is Large ribosomal subunit protein uL5.